The primary structure comprises 116 residues: uncharacterized protein (116 aa).

This is an uncharacterized protein from Invertebrate iridescent virus 6 (IIV-6).